The following is a 105-amino-acid chain: Co-chaperonin GroES (105 aa).

Belongs to the GroES chaperonin family. Heptamer of 7 subunits arranged in a ring. Interacts with the chaperonin GroEL.

It localises to the cytoplasm. Functionally, together with the chaperonin GroEL, plays an essential role in assisting protein folding. The GroEL-GroES system forms a nano-cage that allows encapsulation of the non-native substrate proteins and provides a physical environment optimized to promote and accelerate protein folding. GroES binds to the apical surface of the GroEL ring, thereby capping the opening of the GroEL channel. The polypeptide is Co-chaperonin GroES (Parvibaculum lavamentivorans (strain DS-1 / DSM 13023 / NCIMB 13966)).